The following is a 312-amino-acid chain: Lipoyl synthase (312 aa).

[4Fe-4S] cluster is bound by residues Cys37, Cys42, Cys48, Cys67, Cys71, Cys74, and Ser281. The 219-residue stretch at 52 to 270 (RDGPGTATFM…AVAEREFDFL (219 aa)) folds into the Radical SAM core domain.

The protein belongs to the radical SAM superfamily. Lipoyl synthase family. [4Fe-4S] cluster is required as a cofactor.

Its subcellular location is the cytoplasm. It catalyses the reaction [[Fe-S] cluster scaffold protein carrying a second [4Fe-4S](2+) cluster] + N(6)-octanoyl-L-lysyl-[protein] + 2 oxidized [2Fe-2S]-[ferredoxin] + 2 S-adenosyl-L-methionine + 4 H(+) = [[Fe-S] cluster scaffold protein] + N(6)-[(R)-dihydrolipoyl]-L-lysyl-[protein] + 4 Fe(3+) + 2 hydrogen sulfide + 2 5'-deoxyadenosine + 2 L-methionine + 2 reduced [2Fe-2S]-[ferredoxin]. It participates in protein modification; protein lipoylation via endogenous pathway; protein N(6)-(lipoyl)lysine from octanoyl-[acyl-carrier-protein]: step 2/2. In terms of biological role, catalyzes the radical-mediated insertion of two sulfur atoms into the C-6 and C-8 positions of the octanoyl moiety bound to the lipoyl domains of lipoate-dependent enzymes, thereby converting the octanoylated domains into lipoylated derivatives. The sequence is that of Lipoyl synthase from Halorubrum lacusprofundi (strain ATCC 49239 / DSM 5036 / JCM 8891 / ACAM 34).